The sequence spans 131 residues: Small ribosomal subunit protein uS8 (131 aa).

It belongs to the universal ribosomal protein uS8 family. Part of the 30S ribosomal subunit. Contacts proteins S5 and S12.

Functionally, one of the primary rRNA binding proteins, it binds directly to 16S rRNA central domain where it helps coordinate assembly of the platform of the 30S subunit. This chain is Small ribosomal subunit protein uS8, found in Campylobacter hominis (strain ATCC BAA-381 / DSM 21671 / CCUG 45161 / LMG 19568 / NCTC 13146 / CH001A).